The following is a 391-amino-acid chain: Phosphoglycerate kinase (391 aa).

Substrate is bound by residues 21–23, Arg36, 59–62, Arg114, and Arg147; these read DLN and HLGR. ATP is bound by residues Lys198, Glu315, and 344 to 347; that span reads GGDT.

It belongs to the phosphoglycerate kinase family. As to quaternary structure, monomer.

The protein localises to the cytoplasm. It catalyses the reaction (2R)-3-phosphoglycerate + ATP = (2R)-3-phospho-glyceroyl phosphate + ADP. Its pathway is carbohydrate degradation; glycolysis; pyruvate from D-glyceraldehyde 3-phosphate: step 2/5. This chain is Phosphoglycerate kinase, found in Haemophilus ducreyi (strain 35000HP / ATCC 700724).